We begin with the raw amino-acid sequence, 263 residues long: Undecaprenyl-diphosphatase 2 (263 aa).

Helical transmembrane passes span 15 to 37 (GLTE…LLGF), 42 to 62 (AKVF…VIFW), 83 to 103 (LHII…HSAI), 106 to 126 (VLFG…LMIV), 142 to 162 (ITYK…WPGF), 183 to 203 (AEYT…LDLI), 216 to 236 (LFAT…VSFL), and 242 to 262 (VKLT…YFFI).

This sequence belongs to the UppP family.

It localises to the cell membrane. The catalysed reaction is di-trans,octa-cis-undecaprenyl diphosphate + H2O = di-trans,octa-cis-undecaprenyl phosphate + phosphate + H(+). Its function is as follows. Catalyzes the dephosphorylation of undecaprenyl diphosphate (UPP). Confers resistance to bacitracin. The protein is Undecaprenyl-diphosphatase 2 of Bacillus cereus (strain ATCC 10987 / NRS 248).